The following is a 261-amino-acid chain: Carnitinyl-CoA dehydratase (261 aa).

Glu111 acts as the Nucleophile in catalysis. The active-site Proton acceptor is Glu131.

This sequence belongs to the enoyl-CoA hydratase/isomerase family.

The catalysed reaction is (R)-carnitinyl-CoA = crotonobetainyl-CoA + H2O. It participates in amine and polyamine metabolism; carnitine metabolism. Its function is as follows. Catalyzes the reversible dehydration of L-carnitinyl-CoA to crotonobetainyl-CoA. The chain is Carnitinyl-CoA dehydratase from Shigella flexneri.